Here is a 781-residue protein sequence, read N- to C-terminus: Catalase-peroxidase (781 aa).

The first 20 residues, 1–20 (MLYIYYLFKSLFFHTLFVFS), serve as a signal peptide directing secretion. Residues 125 to 272 (WHSAGTYRIG…LAAVQMGLIY (148 aa)) constitute a cross-link (tryptophyl-tyrosyl-methioninium (Trp-Tyr) (with M-298)). His-126 functions as the Proton acceptor in the catalytic mechanism. Positions 237–256 (VHHPDEHRGAKEKAAKNSDS) are disordered. Residues 272-298 (YVNPEGPDGRPDPLASARDIRETFARM) constitute a cross-link (tryptophyl-tyrosyl-methioninium (Tyr-Met) (with W-125)). A heme b-binding site is contributed by His-313. Residues 317–336 (KTHGAAPADNVGPEPEAGEL) are disordered.

The protein belongs to the peroxidase family. Peroxidase/catalase subfamily. Homodimer or homotetramer. The cofactor is heme b. Post-translationally, formation of the three residue Trp-Tyr-Met cross-link is important for the catalase, but not the peroxidase activity of the enzyme.

It carries out the reaction H2O2 + AH2 = A + 2 H2O. The catalysed reaction is 2 H2O2 = O2 + 2 H2O. Functionally, bifunctional enzyme with both catalase and broad-spectrum peroxidase activity. This Xylella fastidiosa (strain 9a5c) protein is Catalase-peroxidase.